Consider the following 629-residue polypeptide: MLLPSIPSCSFSFVVFVSVLLQTCFSFQLTPLSPKNYPPGASIDTTVNTISPFIGDGRGSDIFNYEYYDERFHFCRPENIAKQSESLGSVLFGDRLYNSPIEIKMLENQDCVPLCASIIPSSDVSFIRDLISKNYVVNWNIDNLPVATYLEGTNSKNYSLSPGFPLGKNTEKGVILFNHYDIVIEYHTTSSDQHRVVGAYVKPVSKESTLVDGNPVCSSSSNPQYLPEGADLTLVTSYSVSWKYSDTPWATRWDKYMHIESRQIRWIFIIHSAIIDTFLIFVVSIILYRTLNRDINKYNSAFVDQEDVQEDFGWKLVHGDVFRPPRRPMLFSILLGTGAQLLFMSSGIVLFAIFGIVAPSRRGSLATATVALFIISGFVSGYVSALSYKLMQGMLRKRNLLLTPFVVPGFMLAAALFFNMVFWSKSSSSTVPFSSWLLLIFLYLLFTVPLSFVGSLIGFRSREFVPPVRTNQIPRQIPSHSIWLSSFPSAIIGGSIPFLVILIELFSILDSLWFHPLYFMFGFSFFCFGILVTTCIMVSIITVYFQLCSENYNWWWRSFITPGFCGIYVFIFSVFYWFFKISSSSLATAVLYFGYSLLISVLVFFLCGSVGFFGAFLFVNKIYASIKID.

The N-terminal stretch at 1–26 is a signal peptide; it reads MLLPSIPSCSFSFVVFVSVLLQTCFS. Residues 27–266 lie on the Lumenal side of the membrane; that stretch reads FQLTPLSPKN…MHIESRQIRW (240 aa). A glycan (N-linked (GlcNAc...) asparagine) is linked at Asn-157. A helical transmembrane segment spans residues 267 to 287; that stretch reads IFIIHSAIIDTFLIFVVSIIL. The Cytoplasmic segment spans residues 288-337; that stretch reads YRTLNRDINKYNSAFVDQEDVQEDFGWKLVHGDVFRPPRRPMLFSILLGT. Residues 338–358 form a helical membrane-spanning segment; it reads GAQLLFMSSGIVLFAIFGIVA. Over 359–364 the chain is Lumenal; that stretch reads PSRRGS. Residues 365–385 traverse the membrane as a helical segment; that stretch reads LATATVALFIISGFVSGYVSA. Over 386–401 the chain is Cytoplasmic; the sequence is LSYKLMQGMLRKRNLL. The helical transmembrane segment at 402 to 422 threads the bilayer; that stretch reads LTPFVVPGFMLAAALFFNMVF. Topologically, residues 423–436 are lumenal; the sequence is WSKSSSSTVPFSSW. A helical membrane pass occupies residues 437–457; sequence LLLIFLYLLFTVPLSFVGSLI. At 458-488 the chain is on the cytoplasmic side; sequence GFRSREFVPPVRTNQIPRQIPSHSIWLSSFP. Residues 489-509 form a helical membrane-spanning segment; sequence SAIIGGSIPFLVILIELFSIL. Residues 510-519 are Lumenal-facing; sequence DSLWFHPLYF. The helical transmembrane segment at 520–544 threads the bilayer; it reads MFGFSFFCFGILVTTCIMVSIITVY. Topologically, residues 545-558 are cytoplasmic; it reads FQLCSENYNWWWRS. The helical transmembrane segment at 559–579 threads the bilayer; it reads FITPGFCGIYVFIFSVFYWFF. Over 580 to 598 the chain is Lumenal; sequence KISSSSLATAVLYFGYSLL. The helical transmembrane segment at 599–619 threads the bilayer; it reads ISVLVFFLCGSVGFFGAFLFV. Topologically, residues 620 to 629 are cytoplasmic; the sequence is NKIYASIKID.

Belongs to the nonaspanin (TM9SF) (TC 9.A.2) family.

Its subcellular location is the golgi apparatus membrane. It is found in the vacuole membrane. This Schizosaccharomyces pombe (strain 972 / ATCC 24843) (Fission yeast) protein is Transmembrane 9 superfamily protein C1105.08.